The following is a 434-amino-acid chain: MEKSVNVIGAGLAGSEATWQLVKRGIKVDLYEMRPVKQTPAHHTDKFAELVCTNSLRANGLTNAVGVIKEEMRILDSIIIESADKASVPAGGALAVDRHEFSGYITEKVKNHPLVTVHTEEVTSIPDGPTIIATGPLTSPALAEEIKQLTGEDYLYFYDAAAPIIEKDSIDMDKVYLKSRYDKGEAAYLNCPMSEEEFKTFYEALVTAETAALKEFEKEVFFEGCMPIEVMAKRGIKTMLFGPLKPVGLEDPKTGKRPYAVLQLRQDDAAGTLYNMVGFQTHLKWGEQKRVFGLIPGLENAEIVRYGVMHRNTFINSPTVLEPTYQLKTRDDLFFAGQMTGVEGYVESAASGLAAGINAANFVQEKETIVFPAESAIGSLAHYITSASKKSFQPMNVNFGLFPELPSKIRAKQERNEKLAERALDAIKKVAEQV.

9–14 is an FAD binding site; sequence GAGLAG.

This sequence belongs to the MnmG family. TrmFO subfamily. It depends on FAD as a cofactor.

Its subcellular location is the cytoplasm. The catalysed reaction is uridine(54) in tRNA + (6R)-5,10-methylene-5,6,7,8-tetrahydrofolate + NADH + H(+) = 5-methyluridine(54) in tRNA + (6S)-5,6,7,8-tetrahydrofolate + NAD(+). The enzyme catalyses uridine(54) in tRNA + (6R)-5,10-methylene-5,6,7,8-tetrahydrofolate + NADPH + H(+) = 5-methyluridine(54) in tRNA + (6S)-5,6,7,8-tetrahydrofolate + NADP(+). Functionally, catalyzes the folate-dependent formation of 5-methyl-uridine at position 54 (M-5-U54) in all tRNAs. The polypeptide is Methylenetetrahydrofolate--tRNA-(uracil-5-)-methyltransferase TrmFO (Listeria welshimeri serovar 6b (strain ATCC 35897 / DSM 20650 / CCUG 15529 / CIP 8149 / NCTC 11857 / SLCC 5334 / V8)).